We begin with the raw amino-acid sequence, 20 residues long: Cathepsin L1 (20 aa).

Positions 1–10 (AVPDKIDPRE) are enriched in basic and acidic residues. The interval 1 to 20 (AVPDKIDPRESGYVTGVKDQ) is disordered.

This sequence belongs to the peptidase C1 family. As to quaternary structure, dimer of a heavy and a light chain linked by disulfide bonds.

Its subcellular location is the lysosome. It carries out the reaction Specificity close to that of papain. As compared to cathepsin B, cathepsin L exhibits higher activity toward protein substrates, but has little activity on Z-Arg-Arg-NHMec, and no peptidyl-dipeptidase activity.. Its function is as follows. Thiol protease that assists the parasite in burrowing through the gut wall and liver of its mammalian host. This Fasciola hepatica (Liver fluke) protein is Cathepsin L1.